The sequence spans 458 residues: Elongation factor 1-alpha (458 aa).

Glycine 2 is modified (n,N,N-trimethylglycine). Lysine 3 carries the post-translational modification N6,N6-dimethyllysine; alternate. The residue at position 3 (lysine 3) is an N6-methyllysine; alternate. The 236-residue stretch at 5–240 (KTHVNVVVIG…DAIEPPQRPT (236 aa)) folds into the tr-type G domain. Residues 14–21 (GHVDSGKS) form a G1 region. Position 14–21 (14–21 (GHVDSGKS)) interacts with GTP. At lysine 30 the chain carries N6-methyllysine. Positions 70 to 74 (GITID) are G2. Lysine 79 is subject to N6,N6,N6-trimethyllysine. Residues 91-94 (DAPG) form a G3 region. GTP-binding positions include 91–95 (DAPGH) and 153–156 (NKMD). Residues 153–156 (NKMD) form a G4 region. The segment at 192-194 (SGW) is G5. Position 316 is an N6,N6-dimethyllysine; alternate (lysine 316). The residue at position 316 (lysine 316) is an N6-methyllysine; alternate. N6-methyllysine is present on lysine 390.

The protein belongs to the TRAFAC class translation factor GTPase superfamily. Classic translation factor GTPase family. EF-Tu/EF-1A subfamily.

The protein resides in the cytoplasm. It functions in the pathway protein biosynthesis; polypeptide chain elongation. Functionally, this protein promotes the GTP-dependent binding of aminoacyl-tRNA to the A-site of ribosomes during protein biosynthesis. The sequence is that of Elongation factor 1-alpha (TEF1) from Meyerozyma guilliermondii (strain ATCC 6260 / CBS 566 / DSM 6381 / JCM 1539 / NBRC 10279 / NRRL Y-324) (Yeast).